The chain runs to 190 residues: Probable chemoreceptor glutamine deamidase CheD (190 aa).

Belongs to the CheD family.

The enzyme catalyses L-glutaminyl-[protein] + H2O = L-glutamyl-[protein] + NH4(+). Its function is as follows. Probably deamidates glutamine residues to glutamate on methyl-accepting chemotaxis receptors (MCPs), playing an important role in chemotaxis. The polypeptide is Probable chemoreceptor glutamine deamidase CheD (Acidiphilium cryptum (strain JF-5)).